A 911-amino-acid polypeptide reads, in one-letter code: Protein translocase subunit SecA (911 aa).

Residues Gln-87, 105-109 (GEGKT), and Asp-513 each bind ATP. A disordered region spans residues 853–911 (IQLQHEQVSGLEPEAGEAPSAGEPRSEQPYVRAGRKVGRNDPCPCGSGKKFKACHGKLG). Residues 862-875 (GLEPEAGEAPSAGE) are compositionally biased toward low complexity. Positions 895, 897, 906, and 907 each coordinate Zn(2+). Residues 901–911 (KKFKACHGKLG) are compositionally biased toward basic residues.

It belongs to the SecA family. Monomer and homodimer. Part of the essential Sec protein translocation apparatus which comprises SecA, SecYEG and auxiliary proteins SecDF-YajC and YidC. Zn(2+) is required as a cofactor.

The protein resides in the cell inner membrane. Its subcellular location is the cytoplasm. It carries out the reaction ATP + H2O + cellular proteinSide 1 = ADP + phosphate + cellular proteinSide 2.. Functionally, part of the Sec protein translocase complex. Interacts with the SecYEG preprotein conducting channel. Has a central role in coupling the hydrolysis of ATP to the transfer of proteins into and across the cell membrane, serving both as a receptor for the preprotein-SecB complex and as an ATP-driven molecular motor driving the stepwise translocation of polypeptide chains across the membrane. The chain is Protein translocase subunit SecA from Teredinibacter turnerae (strain ATCC 39867 / T7901).